Reading from the N-terminus, the 174-residue chain is Ribosome maturation factor RimM (174 aa).

A PRC barrel domain is found at 96 to 170 (PDEFYDHELE…YVVIDPPEGL (75 aa)).

It belongs to the RimM family. As to quaternary structure, binds ribosomal protein uS19.

The protein localises to the cytoplasm. Functionally, an accessory protein needed during the final step in the assembly of 30S ribosomal subunit, possibly for assembly of the head region. Essential for efficient processing of 16S rRNA. May be needed both before and after RbfA during the maturation of 16S rRNA. It has affinity for free ribosomal 30S subunits but not for 70S ribosomes. This chain is Ribosome maturation factor RimM, found in Nocardia farcinica (strain IFM 10152).